The primary structure comprises 334 residues: Phosphate acyltransferase (334 aa).

This sequence belongs to the PlsX family. In terms of assembly, homodimer. Probably interacts with PlsY.

It is found in the cytoplasm. The enzyme catalyses a fatty acyl-[ACP] + phosphate = an acyl phosphate + holo-[ACP]. Its pathway is lipid metabolism; phospholipid metabolism. Catalyzes the reversible formation of acyl-phosphate (acyl-PO(4)) from acyl-[acyl-carrier-protein] (acyl-ACP). This enzyme utilizes acyl-ACP as fatty acyl donor, but not acyl-CoA. In Mycoplasmopsis agalactiae (strain NCTC 10123 / CIP 59.7 / PG2) (Mycoplasma agalactiae), this protein is Phosphate acyltransferase.